The following is a 197-amino-acid chain: Peptide deformylase (197 aa).

Fe cation contacts are provided by cysteine 106 and histidine 148. Residue glutamate 149 is part of the active site. Histidine 152 contributes to the Fe cation binding site.

This sequence belongs to the polypeptide deformylase family. It depends on Fe(2+) as a cofactor.

It catalyses the reaction N-terminal N-formyl-L-methionyl-[peptide] + H2O = N-terminal L-methionyl-[peptide] + formate. In terms of biological role, removes the formyl group from the N-terminal Met of newly synthesized proteins. Requires at least a dipeptide for an efficient rate of reaction. N-terminal L-methionine is a prerequisite for activity but the enzyme has broad specificity at other positions. This is Peptide deformylase from Mycobacterium sp. (strain JLS).